The sequence spans 131 residues: Cuticle protein 79, isoform B (131 aa).

3 repeat units span residues 37-40 (AAPA), 45-48 (AAPA), and 53-56 (AAPA).

Functionally, component of the cuticle of migratory locust which contains more than 100 different structural proteins. This is Cuticle protein 79, isoform B from Locusta migratoria (Migratory locust).